Here is a 225-residue protein sequence, read N- to C-terminus: UPF0173 metal-dependent hydrolase Aflv_0488 (225 aa).

Belongs to the UPF0173 family.

This chain is UPF0173 metal-dependent hydrolase Aflv_0488, found in Anoxybacillus flavithermus (strain DSM 21510 / WK1).